The primary structure comprises 453 residues: MKVLRFNQDASCCVVNSGANELTVYNCDPFGKCFEFNISNVNGDSNDNGIGYDSLEAGSSSIESQVIAEMLFSTSLLAVVDKGQGINTGKKLKIVNIKKRSLICEIAFPSLIVDVVMNRKRICVLLDNDQIFIYDISCMKLMETLDLWESNNEGNLNDHIKVGERASNMINENLKNGNELDRIRSKSNNNNDQTNSDNGRSRTYSINGSHKIKPQLTLSGNDNSILCYSKYSSSKQNPARILNDIVVYDALNLKPINYLNSVHKGCVLKTSVSIDGKLLATASEKGTIIRIHKTGVDSDFASGPLLYKEFRRGSRPSHIHQLLFNKDSTLLVCVGDSDTIHIFRTDDDGLALDGIDGDIGSDSGGSLELIKNRIPHEQVKKFFSRKIKSHIPNQNLHRDFAHINMDRIVHTVVGFPEEFDNKIYVASDDGSFKTYTIPSKHGQCVLNKTSHFI.

One copy of the WD 1 repeat lies at 4–137; it reads LRFNQDASCC…NDQIFIYDIS (134 aa). Residues 177 to 207 are disordered; it reads GNELDRIRSKSNNNNDQTNSDNGRSRTYSIN. Residues 187 to 198 show a composition bias toward low complexity; sequence SNNNNDQTNSDN. WD repeat units follow at residues 252-347 and 419-453; these read NLKP…RTDD and FDNK…SHFI. Positions 310–314 match the L/FRRG motif motif; it reads FRRGS.

Belongs to the WD repeat PROPPIN family.

The protein resides in the cytoplasm. The protein localises to the membrane. It is found in the vacuole membrane. Its function is as follows. Required for cytoplasm to vacuole transport (Cvt) vesicles formation and mitophagy. Involved in binding of phosphatidylethanolamine to ATG8 and in recruitment of ATG8 and ATG5 to the pre-autophagosomal structure. Protects ATG8 from ARG4-mediated cleavage. In Candida glabrata (strain ATCC 2001 / BCRC 20586 / JCM 3761 / NBRC 0622 / NRRL Y-65 / CBS 138) (Yeast), this protein is Autophagy-related protein 21 (ATG21).